The sequence spans 466 residues: Asparagine--tRNA ligase (466 aa).

The protein belongs to the class-II aminoacyl-tRNA synthetase family. In terms of assembly, homodimer.

The protein localises to the cytoplasm. The catalysed reaction is tRNA(Asn) + L-asparagine + ATP = L-asparaginyl-tRNA(Asn) + AMP + diphosphate + H(+). The chain is Asparagine--tRNA ligase from Shewanella denitrificans (strain OS217 / ATCC BAA-1090 / DSM 15013).